The primary structure comprises 389 residues: Na(+)/H(+) antiporter NhaA (389 aa).

Transmembrane regions (helical) follow at residues 14 to 34, 59 to 79, 95 to 115, 124 to 144, 154 to 174, 177 to 197, 213 to 233, 257 to 277, 292 to 312, 328 to 348, and 363 to 383; these read AGGI…NSPL, LILW…GLEV, SLPT…YLLF, AGWA…MALL, VFLL…IALF, TDLS…LVGL, LILW…GVII, PWST…VYVG, IALG…YIAV, IAPV…IASL, and LGTL…LSKV.

Belongs to the NhaA Na(+)/H(+) (TC 2.A.33) antiporter family.

Its subcellular location is the cell inner membrane. It carries out the reaction Na(+)(in) + 2 H(+)(out) = Na(+)(out) + 2 H(+)(in). Functionally, na(+)/H(+) antiporter that extrudes sodium in exchange for external protons. The sequence is that of Na(+)/H(+) antiporter NhaA from Shewanella baltica (strain OS155 / ATCC BAA-1091).